The primary structure comprises 144 residues: Large ribosomal subunit protein uL15 (144 aa).

A disordered region spans residues 1-55; sequence MQLNELKPVAGSRFKRLRKGRGLSSGHGFTSGRGTKGQKAHGKTRLGFEGGQMPL. Gly residues predominate over residues 23 to 35; it reads LSSGHGFTSGRGT.

Belongs to the universal ribosomal protein uL15 family. Part of the 50S ribosomal subunit.

Binds to the 23S rRNA. This is Large ribosomal subunit protein uL15 from Limosilactobacillus fermentum (strain NBRC 3956 / LMG 18251) (Lactobacillus fermentum).